The following is a 393-amino-acid chain: Golgi membrane protein 1 (393 aa).

An N-acetylmethionine modification is found at Met-1. Topologically, residues 1–12 are cytoplasmic; the sequence is MMGLGNGRRSMK. The chain crosses the membrane as a helical; Signal-anchor for type II membrane protein span at residues 13 to 35; the sequence is SPPLILAALVACVIVLGFNYWIA. Over 36–393 the chain is Lumenal; the sequence is SSRSVELQTR…QVGIHIPQQA (358 aa). A coiled-coil region spans residues 40–183; that stretch reads VELQTRIVEL…IEEVIRKRNE (144 aa). 2 N-linked (GlcNAc...) asparagine glycosylation sites follow: Asn-109 and Asn-144. Disordered stretches follow at residues 180-247 and 284-352; these read KRNE…QVQN and HTQL…LAGN. At Ser-187 the chain carries Phosphoserine. 2 stretches are compositionally biased toward polar residues: residues 192-201 and 227-247; these read ETNNQHQQAL and NKSQIPAPNSESLGLKPQVQN. The N-linked (GlcNAc...) asparagine glycan is linked to Asn-227. Residues 294-320 show a composition bias toward basic and acidic residues; that stretch reads RPEEDSQYPEREQLVIRDRQEQQRASE. Residues 330 to 339 show a composition bias toward acidic residues; that stretch reads DEYDMDENEA.

The protein belongs to the GOLM family. As to quaternary structure, interacts with DYM. Post-translationally, glycosylated. In terms of processing, phosphorylation sites are present in the extracellular medium.

The protein localises to the golgi apparatus. The protein resides in the cis-Golgi network membrane. Functionally, unknown. Cellular response protein to viral infection. The polypeptide is Golgi membrane protein 1 (Golm1) (Mus musculus (Mouse)).